Here is a 220-residue protein sequence, read N- to C-terminus: MHLSSPALPIGGFSYSQGLEAAIELGLVHDEASTLAWIESQLVTVMARAEAPLWCLLFEAWRAGDDAAAHGWNQWFHASRETRELRQETEQMGRSLARLAQELGWGTAATRAAVAALRPATLPAVHACACAMWALPREAGLGAYVFSWLENQVAAAIKGVPLGQMAGQRMLERLRAGLPAVLADARARAGATPPRLDTFAPQYAMVSARHETQFSRLFRS.

This sequence belongs to the UreF family. UreD, UreF and UreG form a complex that acts as a GTP-hydrolysis-dependent molecular chaperone, activating the urease apoprotein by helping to assemble the nickel containing metallocenter of UreC. The UreE protein probably delivers the nickel.

Its subcellular location is the cytoplasm. Required for maturation of urease via the functional incorporation of the urease nickel metallocenter. This Bordetella bronchiseptica (strain ATCC BAA-588 / NCTC 13252 / RB50) (Alcaligenes bronchisepticus) protein is Urease accessory protein UreF.